A 360-amino-acid chain; its full sequence is Phospho-N-acetylmuramoyl-pentapeptide-transferase (360 aa).

A run of 10 helical transmembrane segments spans residues 25–45 (RGILSVLTALSLSLWLGPWMI), 73–93 (TMGGALILTAIAISTLLWADL), 97–117 (YVWVVLVVTLLFGAIGWVDDY), 142–162 (IGAAVFLYMTAETPIETTLIV), 167–187 (SVEIQLGIFFVVLTYFVIVGS), 199–219 (GLAIMPTVMVAGALGIFCYLS), 236–256 (AGELIVFCAALVGAGLGFLWF), 263–283 (VFMGDVGALALGAALGTIAVI), 288–308 (IVLFIMGGVFVMETLSVMIQV), and 338–358 (VIVRFWIITVILVLIGLATLK).

Belongs to the glycosyltransferase 4 family. MraY subfamily. The cofactor is Mg(2+).

The protein localises to the cell inner membrane. It carries out the reaction UDP-N-acetyl-alpha-D-muramoyl-L-alanyl-gamma-D-glutamyl-meso-2,6-diaminopimeloyl-D-alanyl-D-alanine + di-trans,octa-cis-undecaprenyl phosphate = di-trans,octa-cis-undecaprenyl diphospho-N-acetyl-alpha-D-muramoyl-L-alanyl-D-glutamyl-meso-2,6-diaminopimeloyl-D-alanyl-D-alanine + UMP. It participates in cell wall biogenesis; peptidoglycan biosynthesis. Catalyzes the initial step of the lipid cycle reactions in the biosynthesis of the cell wall peptidoglycan: transfers peptidoglycan precursor phospho-MurNAc-pentapeptide from UDP-MurNAc-pentapeptide onto the lipid carrier undecaprenyl phosphate, yielding undecaprenyl-pyrophosphoryl-MurNAc-pentapeptide, known as lipid I. The chain is Phospho-N-acetylmuramoyl-pentapeptide-transferase from Pseudomonas aeruginosa (strain LESB58).